Consider the following 36-residue polypeptide: Protein P4 (36 aa).

The helical transmembrane segment at 13 to 33 (GLQLSLLICACLLAVLIVSFC) threads the bilayer.

Its subcellular location is the host membrane. The sequence is that of Protein P4 from Vitis vinifera (Grape).